The chain runs to 643 residues: SURP and G-patch domain-containing protein 1 (643 aa).

Disordered regions lie at residues 48–69 (ARMEQKARQSHVPSPQPPHPGE) and 97–119 (KAQTSTDSAPRAPPSMPTPSSLK). Thr128 is subject to Phosphothreonine. One copy of the SURP motif 1 repeat lies at 187–229 (VIEKLARFVAEGGPELEKVAMEDYKDNPAFTFLHDKNSREFLY). Ser252 carries the post-translational modification Phosphoserine. The stretch at 262–305 (LAEKLARFIADGGPEVETIALQNNRENQAFSFLYDPNSQGYRYY) is one SURP motif 2 repeat. Disordered regions lie at residues 316–335 (KAGSTGSFPAPAPNPSLRRK) and 360–393 (AVNPTPSIPGKPTATAAVKRKRKSRWGPEEDKVE). Ser322 is subject to Phosphoserine. Positions 378–384 (KRKRKSR) match the Nuclear localization signal motif. Residues Ser407, Ser409, Ser412, and Ser483 each carry the phosphoserine modification. Residues 560 to 607 (VENIGYQMLMKMGWKEGEGLGTEGQGIKNPVNKGATTIDGAGFGIDRP) enclose the G-patch domain.

As to quaternary structure, component of the spliceosome.

It is found in the nucleus. Functionally, plays a role in pre-mRNA splicing. This Mus musculus (Mouse) protein is SURP and G-patch domain-containing protein 1 (Sugp1).